Here is a 224-residue protein sequence, read N- to C-terminus: Probable mitochondrial import inner membrane translocase subunit Tim17 4 (224 aa).

3 helical membrane-spanning segments follow: residues 16-36, 60-80, and 115-135; these read CGCAFMMGTMGGSLFQYLKGF, AIAGSFAIWGATFSTVDCVMV, and AFVGCLVLAMLEGAGAAVATI.

It belongs to the Tim17/Tim22/Tim23 family. In terms of assembly, component of the TIM23 complex at least composed of Tim23, Tim17 (Tim17a1, Tim17a2 or Tim17b1) and a Tim50. The complex interacts with the Tim44 component of the PAM complex.

It is found in the mitochondrion inner membrane. In terms of biological role, essential component of the TIM23 complex, a complex that mediates the translocation of transit peptide-containing proteins across the mitochondrial inner membrane. The polypeptide is Probable mitochondrial import inner membrane translocase subunit Tim17 4 (Tim17a2) (Drosophila melanogaster (Fruit fly)).